The sequence spans 380 residues: Cytochrome b (380 aa).

4 helical membrane passes run 34–54 (FGSL…LLAM), 78–99 (WLIR…YLHI), 114–134 (WNTG…GYVL), and 179–199 (FFAL…IHLT). Histidine 84 and histidine 98 together coordinate heme b. Residues histidine 183 and histidine 197 each contribute to the heme b site. Histidine 202 provides a ligand contact to a ubiquinone. 4 consecutive transmembrane segments (helical) span residues 227 to 247 (LKDT…ALFS), 289 to 309 (LGGV…PLLH), 321 to 341 (LSQL…WVGS), and 348 to 368 (FIII…ILLP).

It belongs to the cytochrome b family. The cytochrome bc1 complex contains 11 subunits: 3 respiratory subunits (MT-CYB, CYC1 and UQCRFS1), 2 core proteins (UQCRC1 and UQCRC2) and 6 low-molecular weight proteins (UQCRH/QCR6, UQCRB/QCR7, UQCRQ/QCR8, UQCR10/QCR9, UQCR11/QCR10 and a cleavage product of UQCRFS1). This cytochrome bc1 complex then forms a dimer. The cofactor is heme b.

It localises to the mitochondrion inner membrane. Component of the ubiquinol-cytochrome c reductase complex (complex III or cytochrome b-c1 complex) that is part of the mitochondrial respiratory chain. The b-c1 complex mediates electron transfer from ubiquinol to cytochrome c. Contributes to the generation of a proton gradient across the mitochondrial membrane that is then used for ATP synthesis. The protein is Cytochrome b (MT-CYB) of Fregetta tropica (Black-bellied storm-petrel).